The primary structure comprises 28 residues: Conotoxin Cl1.2 (28 aa).

In terms of processing, contains 2 disulfide bonds. In terms of tissue distribution, expressed by the venom duct.

The protein resides in the secreted. The protein is Conotoxin Cl1.2 of Californiconus californicus (California cone).